A 313-amino-acid polypeptide reads, in one-letter code: Small ribosomal subunit protein uS2 (313 aa).

Residues 233-256 (RTMTDKQSDVAKEAKADGKEEAPK) show a composition bias toward basic and acidic residues. A disordered region spans residues 233–293 (RTMTDKQSDV…SRKLVAAGTA (61 aa)).

It belongs to the universal ribosomal protein uS2 family.

The chain is Small ribosomal subunit protein uS2 from Bdellovibrio bacteriovorus (strain ATCC 15356 / DSM 50701 / NCIMB 9529 / HD100).